The sequence spans 489 residues: MSTRREVILSWLCEKRQTWRLCYLLGEAGSGKTWLAQQLQKDKHRRVITLSLVVSWQGKAAWIVTDDNAAEQGCRDSAWTRDEMAGQLLHALHRTDSRCPLIIIENAHLNHRRILDDLQRAISLIPDGQFLLIGRPDRKVERDFKKQGIELVSIGRLTEHELKASILEGQNIDQPDLLLTARVLKRIALLCRGDRRKLALAGETIRLLQQAEQTSVFTAKQWRMIYRILGDNRPRKMQLAVVMSGTIIALTCGWLLLSSFTATLPVPAWLIPVTPVVKQDMTKDIAHVVMRDSEALSVLYGVWGYEVPADSAWCDQAVRAGLACKSGNASLQTLVDQNLPWIASLKVGDKKLPVVVVRVGEASVDVLVGQQTWTLTHKWFESVWTGDYLLLWKMSPEGESTITRDSSEEEILWLETMLNRALHISTEPSAEWRPLLVEKIKQFQKSHHLKTDGVVGFSTLVHLWQVAGESAYLYRDEANISPETTVKGK.

G26–T33 provides a ligand contact to ATP. A helical membrane pass occupies residues M237–L257.

It belongs to the ExeA family.

The protein localises to the cell membrane. Functionally, may play a regulatory role under conditions of derepressed gsp gene expression. In Escherichia coli (strain K12), this protein is Putative general secretion pathway protein A (gspA).